The following is a 354-amino-acid chain: Magnesium-protoporphyrin IX monomethyl ester [oxidative] cyclase (354 aa).

This sequence belongs to the AcsF family. Requires Fe cation as cofactor.

It is found in the plastid. Its subcellular location is the chloroplast. It catalyses the reaction Mg-protoporphyrin IX 13-monomethyl ester + 3 NADPH + 3 O2 + 2 H(+) = 3,8-divinyl protochlorophyllide a + 3 NADP(+) + 5 H2O. It participates in porphyrin-containing compound metabolism; chlorophyll biosynthesis (light-independent). Its function is as follows. Catalyzes the formation of the isocyclic ring in chlorophyll biosynthesis. Mediates the cyclase reaction, which results in the formation of divinylprotochlorophyllide (Pchlide) characteristic of all chlorophylls from magnesium-protoporphyrin IX 13-monomethyl ester (MgPMME). The chain is Magnesium-protoporphyrin IX monomethyl ester [oxidative] cyclase from Cyanidium caldarium (Red alga).